Here is a 1434-residue protein sequence, read N- to C-terminus: Pleiotropic drug resistance protein 1 (1434 aa).

A disordered region spans residues 1 to 22 (MEPANLSNLRGSSLRGSTRGSL). An ABC transporter 1 domain is found at 161 to 434 (LNSLHILSSR…FESMGFKCPQ (274 aa)). 194 to 201 (GPPSSGKT) is an ATP binding site. An ABC transmembrane type-2 1 domain is found at 512-725 (ELLKVCTERE…SVNSILVNEF (214 aa)). 7 helical membrane-spanning segments follow: residues 530-550 (FVYMFKFSQLTIMALITMTLF), 563-583 (GGIYAGALFFVVIMIMFNGMS), 618-638 (IPVTLVEVGLWVILTYYVIGF), 649-669 (FLLLIVVNQMASGMFRFIGAV), 675-695 (VASTFGSFALLLQFALGGFVL), 702-722 (SWWIWGYWISPMMYSVNSILV), and 760-780 (IGVGALVGFTVVFNFCYSLAL). The interval 793-824 (LPEDGENAENGEVSSQITSTDGGDSISESQNN) is disordered. Polar residues predominate over residues 804 to 824 (EVSSQITSTDGGDSISESQNN). Residues 837–1089 (ITFDDVVYSV…HLIKYFESNP (253 aa)) enclose the ABC transporter 2 domain. 882 to 889 (GVSGAGKT) contributes to the ATP binding site. The ABC transmembrane type-2 2 domain occupies 1162–1376 (TQCVACLWKQ…TLYGLVASQF (215 aa)). 7 consecutive transmembrane segments (helical) span residues 1181–1201 (YTAVRFIFTTFIALIFGTMFW), 1221–1241 (YAAVLFLGVQNASSVQPVVAI), 1269–1289 (IPYIFVQSVFYGIIVYAMIGF), 1296–1316 (FFWYLFIMFFTLLYFTFYGMM), 1326–1346 (VASIVAAFFYGVWNLFSGFII), 1357–1377 (WYYWANPVAWTLYGLVASQFG), and 1406–1426 (VVAAVLTAYVFMFAFTFAFAI).

It belongs to the ABC transporter superfamily. ABCG family. PDR (TC 3.A.1.205) subfamily.

The protein localises to the membrane. May be a general defense protein. This Nicotiana tabacum (Common tobacco) protein is Pleiotropic drug resistance protein 1 (PDR1).